Consider the following 644-residue polypeptide: Neurofilament medium polypeptide (644 aa).

A coil 1B region spans residues 1–33; the sequence is VKVELDKKVQSLQDEVAFLRTNHEEEVADLLAQ. Positions 1-197 constitute an IF rod domain; it reads VKVELDKKVQ…KLLEGEETRF (197 aa). S11 bears the Phosphoserine mark. The segment at 34–50 is linker 12; sequence IQASHITVERKDYLKTD. A coil 2A region spans residues 51 to 72; it reads ISSALKEIRSQLECHSDQNMHQ. Residues 73 to 76 form a linker 2 region; that stretch reads AEEW. The coil 2B stretch occupies residues 77–197; it reads FKCRYAKLTE…KLLEGEETRF (121 aa). Y105 carries the phosphotyrosine modification. 3 positions are modified to phosphoserine: S131, S203, and S215. A tail region spans residues 198–643; that stretch reads STFSGSITGP…HAIVKEVTQS (446 aa). T217 carries O-linked (GlcNAc) threonine glycosylation. Phosphoserine occurs at positions 253 and 269. Residues 270–582 form a disordered region; sequence VKEEEKEEEA…GGDRSEEKVV (313 aa). The segment covering 274 to 292 has biased composition (acidic residues); that stretch reads EKEEEAEGKEEEQEAEEEV. S298 bears the Phosphoserine mark. Over residues 308-328 the composition is skewed to acidic residues; that stretch reads KEEEGEKEEEGQEEEEEEEDE. The segment covering 329 to 350 has biased composition (basic and acidic residues); it reads GVKSDQAEEGGSEKEGSSKNEG. 4 positions are modified to phosphoserine: S332, S340, S345, and S346. The span at 351–368 shows a compositional bias: acidic residues; that stretch reads EQEEGETEAEGEVEEAEA. At T357 the chain carries Phosphothreonine. Residues 369–400 are compositionally biased toward basic and acidic residues; it reads KEEKKTEEKSEEVAAKEEPVTEAKVGKPEKAK. Phosphoserine occurs at positions 401, 406, 442, and 465. Residues 422–470 show a composition bias toward basic and acidic residues; it reads GEQKEEEEKVEEEKKKAAKESPKEEKVEKKEEKPKDVPKKKAESPVKEE. The segment covering 474-483 has biased composition (low complexity); it reads EAATITKPTK. A compositionally biased stretch (basic and acidic residues) spans 485–508; it reads GLEKETKEGEKPLQQEKEKEKAGE. S512, S550, and S566 each carry phosphoserine. Over residues 545–557 the composition is skewed to basic and acidic residues; it reads TKEKGSGREEEKG. The span at 568-582 shows a compositional bias: basic and acidic residues; the sequence is ADEKKGGDRSEEKVV.

The protein belongs to the intermediate filament family. In terms of assembly, forms heterodimers with NEFL; which can further hetero-oligomerize (in vitro). Forms heterodimers with INA (in vitro). There are a number of repeats of the tripeptide K-S-P, NFM is phosphorylated on a number of the serines in this motif. It is thought that phosphorylation of NFM results in the formation of interfilament cross bridges that are important in the maintenance of axonal caliber. Post-translationally, phosphorylation seems to play a major role in the functioning of the larger neurofilament polypeptides (NF-M and NF-H), the levels of phosphorylation being altered developmentally and coincidentally with a change in the neurofilament function. In terms of processing, phosphorylated in the head and rod regions by the PKC kinase PKN1, leading to the inhibition of polymerization.

Its subcellular location is the cytoplasm. It is found in the cytoskeleton. The protein resides in the cell projection. It localises to the axon. Neurofilaments usually contain three intermediate filament proteins: NEFL, NEFM, and NEFH which are involved in the maintenance of neuronal caliber. May additionally cooperate with the neuronal intermediate filament proteins PRPH and INA to form neuronal filamentous networks. In Oryctolagus cuniculus (Rabbit), this protein is Neurofilament medium polypeptide (NEFM).